A 156-amino-acid chain; its full sequence is Small ribosomal subunit protein uS7 (156 aa).

The protein belongs to the universal ribosomal protein uS7 family. In terms of assembly, part of the 30S ribosomal subunit. Contacts proteins S9 and S11.

Functionally, one of the primary rRNA binding proteins, it binds directly to 16S rRNA where it nucleates assembly of the head domain of the 30S subunit. Is located at the subunit interface close to the decoding center, probably blocks exit of the E-site tRNA. This is Small ribosomal subunit protein uS7 from Azotobacter vinelandii (strain DJ / ATCC BAA-1303).